We begin with the raw amino-acid sequence, 420 residues long: ATP phosphoribosyltransferase regulatory subunit (420 aa).

This sequence belongs to the class-II aminoacyl-tRNA synthetase family. HisZ subfamily. In terms of assembly, heteromultimer composed of HisG and HisZ subunits.

The protein resides in the cytoplasm. Its pathway is amino-acid biosynthesis; L-histidine biosynthesis; L-histidine from 5-phospho-alpha-D-ribose 1-diphosphate: step 1/9. Functionally, required for the first step of histidine biosynthesis. May allow the feedback regulation of ATP phosphoribosyltransferase activity by histidine. The polypeptide is ATP phosphoribosyltransferase regulatory subunit (Bacillus cereus (strain G9842)).